A 238-amino-acid chain; its full sequence is Ribonuclease PH (238 aa).

Phosphate contacts are provided by residues R86 and 124-126; that span reads GTR.

The protein belongs to the RNase PH family. In terms of assembly, homohexameric ring arranged as a trimer of dimers.

The enzyme catalyses tRNA(n+1) + phosphate = tRNA(n) + a ribonucleoside 5'-diphosphate. Phosphorolytic 3'-5' exoribonuclease that plays an important role in tRNA 3'-end maturation. Removes nucleotide residues following the 3'-CCA terminus of tRNAs; can also add nucleotides to the ends of RNA molecules by using nucleoside diphosphates as substrates, but this may not be physiologically important. Probably plays a role in initiation of 16S rRNA degradation (leading to ribosome degradation) during starvation. This is Ribonuclease PH from Vibrio vulnificus (strain CMCP6).